The primary structure comprises 349 residues: Cytokine response-modifying protein B (349 aa).

A signal peptide spans 1–22 (MKSVLYLYILFLSCIIINGRDA). Positions 1 to 160 (MKSVLYLYIL…SPCGFGTYSH (160 aa)) are TNF-binding. TNFR-Cys repeat units lie at residues 31 to 66 (KCKD…TQCT) and 67 to 108 (PCGS…NRIC). 6 cysteine pairs are disulfide-bonded: cysteine 32–cysteine 43, cysteine 44–cysteine 57, cysteine 47–cysteine 65, cysteine 68–cysteine 83, cysteine 86–cysteine 100, and cysteine 90–cysteine 108. Asparagine 101, asparagine 173, asparagine 189, asparagine 215, and asparagine 248 each carry an N-linked (GlcNAc...) asparagine; by host glycan. Positions 161–349 (TVSSADKCEP…ITNSKPTRFL (189 aa)) are chemokine-binding.

It belongs to the orthopoxvirus OPG002 family. In terms of assembly, homodimer. Interacts with host TNF, LTA, CCL28, CCL25, CXCL12, CXCL13 and CXCl14.

The protein localises to the secreted. Its function is as follows. Inhibits host immune defense by binding to host TNF and various chemokines in the extracellular space. Binds host CC chemokines (beta chemokines) and CXC chemokines (alpha chemokines). The chain is Cytokine response-modifying protein B (OPG002) from Variola virus (isolate Human/India/Ind3/1967) (VARV).